The primary structure comprises 438 residues: Transcription termination factor Rho (438 aa).

A Rho RNA-BD domain is found at 70–145; that stretch reads YILFTGILEI…LKIEAINYLP (76 aa). Residues 188-193, 200-205, and Arg-231 contribute to the ATP site; these read GKGQRA and RTGKTE.

Belongs to the Rho family. In terms of assembly, homohexamer. The homohexamer assembles into an open ring structure.

In terms of biological role, facilitates transcription termination by a mechanism that involves Rho binding to the nascent RNA, activation of Rho's RNA-dependent ATPase activity, and release of the mRNA from the DNA template. This is Transcription termination factor Rho from Helicobacter pylori (strain J99 / ATCC 700824) (Campylobacter pylori J99).